The chain runs to 232 residues: MTNADPHELQKFSDLAHRWWDPNAEFKPLHDLNPVRLAWIDSHAHLAGKRALDVGCGGGILSESMAGLGAQVKGIDLSTEALGVADLHSLESGITVDYEAIAAEAIAAREPGTYDVVTCMEMLEHVPSPADIVAACATLVKPGGWVFFSTLNRNLKSYLFAVIGAEYIAQMLPKGTHDYARFIRPSELAGFVRATDLHIVEIKGITYHPLGKRFALSNDTDINYLVACRRAA.

Residues arginine 36, glycine 55, aspartate 76, and methionine 120 each contribute to the S-adenosyl-L-methionine site.

It belongs to the methyltransferase superfamily. UbiG/COQ3 family.

The enzyme catalyses a 3-demethylubiquinol + S-adenosyl-L-methionine = a ubiquinol + S-adenosyl-L-homocysteine + H(+). It carries out the reaction a 3-(all-trans-polyprenyl)benzene-1,2-diol + S-adenosyl-L-methionine = a 2-methoxy-6-(all-trans-polyprenyl)phenol + S-adenosyl-L-homocysteine + H(+). Its pathway is cofactor biosynthesis; ubiquinone biosynthesis. In terms of biological role, O-methyltransferase that catalyzes the 2 O-methylation steps in the ubiquinone biosynthetic pathway. The sequence is that of Ubiquinone biosynthesis O-methyltransferase from Burkholderia multivorans (strain ATCC 17616 / 249).